The chain runs to 258 residues: 3-deoxy-manno-octulosonate cytidylyltransferase (258 aa).

The protein belongs to the KdsB family.

It is found in the cytoplasm. It carries out the reaction 3-deoxy-alpha-D-manno-oct-2-ulosonate + CTP = CMP-3-deoxy-beta-D-manno-octulosonate + diphosphate. Its pathway is nucleotide-sugar biosynthesis; CMP-3-deoxy-D-manno-octulosonate biosynthesis; CMP-3-deoxy-D-manno-octulosonate from 3-deoxy-D-manno-octulosonate and CTP: step 1/1. It functions in the pathway bacterial outer membrane biogenesis; lipopolysaccharide biosynthesis. Its function is as follows. Activates KDO (a required 8-carbon sugar) for incorporation into bacterial lipopolysaccharide in Gram-negative bacteria. This is 3-deoxy-manno-octulosonate cytidylyltransferase from Blochmanniella floridana.